We begin with the raw amino-acid sequence, 187 residues long: Intermembrane transport lipoprotein PqiC (187 aa).

The N-terminal stretch at Met-1–Gly-15 is a signal peptide. The N-palmitoyl cysteine moiety is linked to residue Cys-16. Cys-16 carries S-diacylglycerol cysteine lipidation.

May form a complex composed of PqiA, PqiB and PqiC. Interacts with PqiB.

The protein resides in the cell outer membrane. Component of a transport pathway that contributes to membrane integrity. This Escherichia coli (strain K12) protein is Intermembrane transport lipoprotein PqiC.